The sequence spans 345 residues: Nuclear distribution protein nudE-like 1 (345 aa).

Residues Lys-27–Val-190 adopt a coiled-coil conformation. Residues Val-56–Ser-166 are self-association. The interaction with KATNB1 stretch occupies residues Asp-64–Glu-189. A required for interaction with PAFAH1B1 region spans residues Tyr-114–Ile-133. The segment at Arg-175–Val-345 is interaction with CENPF. Residues Glu-189–Val-256 are interaction with YWHAE. Residues Thr-191–Val-345 are interaction with NEFL. The interaction with KATNA1 stretch occupies residues Ala-195–Val-256. Ser-215 is subject to Phosphoserine. The disordered stretch occupies residues Pro-217 to Gly-240. Thr-219 is modified (phosphothreonine; by CDK1 and MAPK1). The interaction with DISC1 stretch occupies residues Asn-227–Lys-278. At Ser-231 the chain carries Phosphoserine. Ser-242 bears the Phosphoserine; by CDK1 mark. The residue at position 245 (Thr-245) is a Phosphothreonine; by CDK1 and MAPK1. A required for localization to the centrosome and interaction with dynein, dynactin, tubulin gamma, PCM1 and PCNT region spans residues Val-256–Val-291. A lipid anchor (S-palmitoyl cysteine; by ZDHHC2, ZDHHC3 and ZDHHC7) is attached at Cys-273. The interval Ala-316–Val-345 is disordered. Residues Leu-329–Gly-339 show a composition bias toward low complexity. A Phosphoserine modification is found at Ser-344.

It belongs to the nudE family. In terms of assembly, self-associates. Interacts with DISC1, dynein, dynactin, tubulin gamma, KATNA1, KATNB1, microtubules, PAFAH1B1, PCM1, PCNT, and YWHAE. Interacts directly with NEFL and indirectly with NEFH. Interacts (via C-terminus) with CENPF. Interacts with ZNF365. Interacts with PLEKHM1 (via N- and C-terminus). Interacts with GTP-bound RAB9A; the interaction may lead to RAB9A-dynein motor tethering. In terms of processing, phosphorylated in mitosis. Can be phosphorylated by CDK1, CDK5 and MAPK1. Phosphorylation by CDK5 promotes interaction with KATNA1 and YWHAE. Post-translationally, palmitoylation at Cys-273 reduces affinity for dynein. In terms of tissue distribution, expressed at low levels in heart, hypothalamus, liver, lung, spleen and stomach. Expressed at higher levels in testis and brain. Within the brain, expressed in cerebellum, cerebral stem, cortex and striatum.

It localises to the cytoplasm. Its subcellular location is the cytoskeleton. It is found in the microtubule organizing center. The protein resides in the centrosome. The protein localises to the chromosome. It localises to the centromere. Its subcellular location is the kinetochore. It is found in the spindle. In terms of biological role, required for organization of the cellular microtubule array and microtubule anchoring at the centrosome. May regulate microtubule organization at least in part by targeting the microtubule severing protein KATNA1 to the centrosome. Also positively regulates the activity of the minus-end directed microtubule motor protein dynein. May enhance dynein-mediated microtubule sliding by targeting dynein to the microtubule plus ends. Required for several dynein- and microtubule-dependent processes such as the maintenance of Golgi integrity, the centripetal motion of secretory vesicles and the coupling of the nucleus and centrosome. Also required during brain development for the migration of newly formed neurons from the ventricular/subventricular zone toward the cortical plate. Plays a role, together with DISC1, in the regulation of neurite outgrowth. Required for mitosis in some cell types but appears to be dispensible for mitosis in cortical neuronal progenitors, which instead requires NDE1. Facilitates the polymerization of neurofilaments from the individual subunits NEFH and NEFL. Positively regulates lysosome peripheral distribution and ruffled border formation in osteoclasts. Plays a role, together with DISC1, in the regulation of neurite outgrowth. May act as a RAB9A/B effector that tethers RAB9-associated late endosomes to the dynein motor for their retrograde transport to the trans-Golgi network. The sequence is that of Nuclear distribution protein nudE-like 1 (NDEL1) from Oryctolagus cuniculus (Rabbit).